Here is a 194-residue protein sequence, read N- to C-terminus: Phosphoheptose isomerase (194 aa).

Residues 37 to 194 (ISNSFKQGGK…LIEFEMAKQA (158 aa)) enclose the SIS domain. 52 to 54 (NGG) is a binding site for substrate. Zn(2+)-binding residues include His-61 and Glu-65. Substrate-binding positions include Glu-65, 93-94 (ND), 119-121 (STS), Ser-124, and Gln-172. 2 residues coordinate Zn(2+): Gln-172 and His-180.

It belongs to the SIS family. GmhA subfamily. In terms of assembly, homotetramer. Zn(2+) serves as cofactor.

The protein resides in the cytoplasm. It carries out the reaction 2 D-sedoheptulose 7-phosphate = D-glycero-alpha-D-manno-heptose 7-phosphate + D-glycero-beta-D-manno-heptose 7-phosphate. The protein operates within carbohydrate biosynthesis; D-glycero-D-manno-heptose 7-phosphate biosynthesis; D-glycero-alpha-D-manno-heptose 7-phosphate and D-glycero-beta-D-manno-heptose 7-phosphate from sedoheptulose 7-phosphate: step 1/1. In terms of biological role, catalyzes the isomerization of sedoheptulose 7-phosphate in D-glycero-D-manno-heptose 7-phosphate. The polypeptide is Phosphoheptose isomerase (Haemophilus influenzae (strain PittEE)).